We begin with the raw amino-acid sequence, 346 residues long: D-alanine--D-alanine ligase (346 aa).

Positions 133–327 constitute an ATP-grasp domain; it reads KLYAKSVGVK…ALADQISLEK (195 aa). Residue 159–211 participates in ATP binding; that stretch reads LSFPCIIKPARLGSSIGISIVKDEKDLEYAKDVGFEFDNDLVVEEFKNNIKEY. Residues D284, E296, and N298 each coordinate Mg(2+).

Belongs to the D-alanine--D-alanine ligase family. Mg(2+) is required as a cofactor. The cofactor is Mn(2+).

Its subcellular location is the cytoplasm. The enzyme catalyses 2 D-alanine + ATP = D-alanyl-D-alanine + ADP + phosphate + H(+). The protein operates within cell wall biogenesis; peptidoglycan biosynthesis. Its function is as follows. Cell wall formation. The chain is D-alanine--D-alanine ligase from Campylobacter jejuni subsp. jejuni serotype O:6 (strain 81116 / NCTC 11828).